The primary structure comprises 843 residues: Pullulanase (843 aa).

The N-terminal stretch at 1–19 is a signal peptide; the sequence is MKTKLWLLLVLLLSALIFS. The active-site Nucleophile is D535. E564 acts as the Proton donor in catalysis.

It belongs to the glycosyl hydrolase 13 family.

It carries out the reaction Hydrolysis of (1-&gt;6)-alpha-D-glucosidic linkages in pullulan, amylopectin and glycogen, and in the alpha- and beta-limit dextrins of amylopectin and glycogen.. The chain is Pullulanase (pulA) from Thermotoga maritima (strain ATCC 43589 / DSM 3109 / JCM 10099 / NBRC 100826 / MSB8).